The sequence spans 339 residues: Silicatein (339 aa).

Residues 1-18 form the signal peptide; sequence MAIVYGAILFQIILIACA. Positions 19-122 are excised as a propeptide; that stretch reads EFPPEWHAWK…REYQAPATVS (104 aa). L123 is subject to N,N-dimethylleucine; alternate. N-methylleucine; alternate is present on L123. Phosphoserine is present on S188. The residue at position 219 (Y219) is a Phosphotyrosine. Catalysis depends on residues H286 and N306. S335 carries the post-translational modification Phosphoserine.

This sequence belongs to the peptidase C1 family. Homodimer. Homodimerization occurs as a result of non-covalent interactions and not through disulfide linkages between the two monomers.

In terms of biological role, polymerizes silica around the axial filament during spicule formation. The chain is Silicatein from Petrosia ficiformis (Common Mediterranean sponge).